A 184-amino-acid polypeptide reads, in one-letter code: TRAF-interacting protein with FHA domain-containing protein A (184 aa).

Thr-9 bears the Phosphothreonine; by ALPK1 mark. The FHA domain maps to 47-103 (VKFGRNSNICHYTFQDKQVSRVQFSLQLFKKFNSSVLSFEIKNMSKKTNLIVDSREL). The segment at 165–184 (TYSLCSSQSSSPTEMDENES) is disordered. A compositionally biased stretch (polar residues) spans 167-177 (SLCSSQSSSPT).

It belongs to the TIFA family. Homooligomer; homooligomerizes following phosphorylation at Thr-9. Interacts with IRAK1, TRAF2 and TRAF6. Interacts with TIFAB; binding to TIFAB inhibits TRAF6 activation, possibly by inducing a conformational change in TIFA. Interacts with ZCCHC11; binding to ZCCHC11 suppresses the TRAF6-dependent activation of NF-kappa-B. Phosphorylated at Thr-9 following detection of ADP-D-glycero-beta-D-manno-heptose (ADP-Heptose) by ALPK1. Phosphorylation at Thr-9 by ALPK1 leads to the formation of an intermolecular binding between the FHA domain and phosphorylated Thr-9, promoting TIFA oligomerization and TIFA-mediated NF-kappa-B activation.

The protein resides in the cytoplasm. In terms of biological role, adapter molecule that plays a key role in the activation of pro-inflammatory NF-kappa-B signaling following detection of bacterial pathogen-associated molecular pattern metabolites (PAMPs). Promotes activation of an innate immune response by inducing the oligomerization and polyubiquitination of TRAF6, which leads to the activation of TAK1 and IKK through a proteasome-independent mechanism. TIFA-dependent innate immune response is triggered by ADP-D-glycero-beta-D-manno-heptose (ADP-Heptose), a potent PAMP present in all Gram-negative and some Gram-positive bacteria: ADP-Heptose is recognized by ALPK1, which phosphorylates TIFA at Thr-9, leading to TIFA homooligomerization and subsequent activation of pro-inflammatory NF-kappa-B signaling. The sequence is that of TRAF-interacting protein with FHA domain-containing protein A from Homo sapiens (Human).